The following is a 443-amino-acid chain: Ribosomal protein uS12 methylthiotransferase RimO (443 aa).

One can recognise an MTTase N-terminal domain in the interval 8 to 118; it reads PKVGFVSLGC…VVNAVHEVVP (111 aa). 6 residues coordinate [4Fe-4S] cluster: Cys17, Cys53, Cys82, Cys151, Cys155, and Cys158. Residues 137-375 form the Radical SAM core domain; that stretch reads LTPRHYAYLK…MAHQQAISAA (239 aa). Residues 378-443 form the TRAM domain; it reads QLRIGKEIDV…DEYDMWAEPI (66 aa).

This sequence belongs to the methylthiotransferase family. RimO subfamily. The cofactor is [4Fe-4S] cluster.

It localises to the cytoplasm. It carries out the reaction L-aspartate(89)-[ribosomal protein uS12]-hydrogen + (sulfur carrier)-SH + AH2 + 2 S-adenosyl-L-methionine = 3-methylsulfanyl-L-aspartate(89)-[ribosomal protein uS12]-hydrogen + (sulfur carrier)-H + 5'-deoxyadenosine + L-methionine + A + S-adenosyl-L-homocysteine + 2 H(+). Its function is as follows. Catalyzes the methylthiolation of an aspartic acid residue of ribosomal protein uS12. This is Ribosomal protein uS12 methylthiotransferase RimO from Pseudomonas putida (strain ATCC 700007 / DSM 6899 / JCM 31910 / BCRC 17059 / LMG 24140 / F1).